Consider the following 934-residue polypeptide: Protein translocase subunit SecA (934 aa).

ATP-binding positions include Gln90, 108–112 (GEGKT), and Asp509. The tract at residues 535–565 (PEEDHTPPVPLQRSAPGGFSDAAAPSLPRSG) is disordered.

Belongs to the SecA family. Monomer and homodimer. Part of the essential Sec protein translocation apparatus which comprises SecA, SecYEG and auxiliary proteins SecDF. Other proteins may also be involved.

The protein localises to the cell inner membrane. It localises to the cellular thylakoid membrane. It is found in the cytoplasm. It catalyses the reaction ATP + H2O + cellular proteinSide 1 = ADP + phosphate + cellular proteinSide 2.. In terms of biological role, part of the Sec protein translocase complex. Interacts with the SecYEG preprotein conducting channel. Has a central role in coupling the hydrolysis of ATP to the transfer of proteins into and across the cell membrane, serving as an ATP-driven molecular motor driving the stepwise translocation of polypeptide chains across the membrane. Probably participates in protein translocation into and across both the cytoplasmic and thylakoid membranes in cyanobacterial cells. The polypeptide is Protein translocase subunit SecA (Synechococcus sp. (strain CC9605)).